The following is a 294-amino-acid chain: 4-hydroxy-tetrahydrodipicolinate synthase (294 aa).

Thr47 provides a ligand contact to pyruvate. Tyr135 serves as the catalytic Proton donor/acceptor. Lys163 (schiff-base intermediate with substrate) is an active-site residue. Position 206 (Ile206) interacts with pyruvate.

This sequence belongs to the DapA family. As to quaternary structure, homodimer.

The protein localises to the cytoplasm. It catalyses the reaction L-aspartate 4-semialdehyde + pyruvate = (2S,4S)-4-hydroxy-2,3,4,5-tetrahydrodipicolinate + H2O + H(+). It functions in the pathway amino-acid biosynthesis; L-lysine biosynthesis via DAP pathway; (S)-tetrahydrodipicolinate from L-aspartate: step 3/4. Catalyzes the condensation of (S)-aspartate-beta-semialdehyde [(S)-ASA] and pyruvate to 4-hydroxy-tetrahydrodipicolinate (HTPA). This is 4-hydroxy-tetrahydrodipicolinate synthase from Staphylococcus epidermidis (strain ATCC 35984 / DSM 28319 / BCRC 17069 / CCUG 31568 / BM 3577 / RP62A).